Consider the following 457-residue polypeptide: Cell division cycle 20.1, cofactor of APC complex (457 aa).

WD repeat units lie at residues 138 to 175, 180 to 219, 223 to 260, 264 to 303, 312 to 354, 356 to 397, and 400 to 439; these read VDDF…TSEL, EEKG…QLRT, GHQS…PIVE, GHTQ…SNST, EHTS…CLNS, DTGS…KMAE, and GHTS…ETAK.

Belongs to the WD repeat CDC20/Fizzy family. In terms of assembly, the APC/C is composed of at least 11 subunits that stay tightly associated throughout the cell cycle. Interacts with APC10, FZR1, FZR2, FZR3. Binds to GIG1 and PYM. Part of the mitotic checkpoint complex (MCC); interacts with MAD2, BUB3.1, BUBR1 and BUB1. Binds to cyclins CYCA1-2, CYCB2-1 and CYCB2-2. Interacts with PANS1. Expressed in meristems and organ primordia. Present in flowers, leaves, stems, roots, pollen grains and developing seeds.

Its subcellular location is the nucleus. The protein operates within protein modification; protein ubiquitination. In terms of biological role, component of the anaphase promoting complex/cyclosome (APC/C), a cell cycle-regulated E3 ubiquitin-protein ligase complex that controls progression through mitosis and the G1 phase of the cell cycle. The protein is Cell division cycle 20.1, cofactor of APC complex (CDC20-1) of Arabidopsis thaliana (Mouse-ear cress).